The sequence spans 184 residues: Fe/S biogenesis protein NfuA (184 aa).

Residues Cys-142 and Cys-145 each coordinate [4Fe-4S] cluster.

It belongs to the NfuA family. As to quaternary structure, homodimer. [4Fe-4S] cluster serves as cofactor.

Involved in iron-sulfur cluster biogenesis. Binds a 4Fe-4S cluster, can transfer this cluster to apoproteins, and thereby intervenes in the maturation of Fe/S proteins. Could also act as a scaffold/chaperone for damaged Fe/S proteins. The polypeptide is Fe/S biogenesis protein NfuA (Wigglesworthia glossinidia brevipalpis).